The primary structure comprises 701 residues: DC-STAMP domain-containing protein 2 (701 aa).

4 helical membrane-spanning segments follow: residues 15 to 35 (TCGF…ELLG), 40 to 60 (PFGC…GMGF), 82 to 102 (LLLL…NTLQ), and 215 to 235 (FPHL…LASL). Residues asparagine 272 and asparagine 284 are each glycosylated (N-linked (GlcNAc...) asparagine). The next 2 helical transmembrane spans lie at 310–330 (ALSL…IQAL) and 404–424 (LLIM…LDLA). An N-linked (GlcNAc...) asparagine glycan is attached at asparagine 468. A helical membrane pass occupies residues 488-508 (YIVIGTMYGLCFFVTLFGSYV). The disordered stretch occupies residues 673 to 701 (LQEALGTNLSDKSTSKPERAGNRNQDRKQ). A compositionally biased stretch (basic and acidic residues) spans 685–701 (STSKPERAGNRNQDRKQ).

In terms of assembly, interacts with DCST1. Expressed in testis.

The protein resides in the cytoplasmic vesicle. Its subcellular location is the secretory vesicle. It is found in the acrosome membrane. In terms of biological role, essential sperm cell-surface protein required for sperm-egg fusion and fertilization. This Mus musculus (Mouse) protein is DC-STAMP domain-containing protein 2.